A 258-amino-acid chain; its full sequence is UPF0246 protein NTHI1156 (258 aa).

It belongs to the UPF0246 family.

The chain is UPF0246 protein NTHI1156 from Haemophilus influenzae (strain 86-028NP).